A 1408-amino-acid chain; its full sequence is Palladin (1408 aa).

The tract at residues 69-229 (SKSPISLCET…SASQSPTADQ (161 aa)) is disordered. 2 stretches are compositionally biased toward polar residues: residues 149–169 (PNPS…QSQL) and 193–229 (RSPN…TADQ). Serine 194 is subject to Phosphoserine. Ig-like C2-type domains follow at residues 278 to 367 (PRFI…AEVF) and 448 to 546 (PVFT…LVIT). 2 cysteine pairs are disulfide-bonded: cysteine 299-cysteine 351 and cysteine 469-cysteine 528. The segment at 569-573 (FPPPP) is interaction with VASP. Disordered regions lie at residues 631–660 (NGKA…LAKP) and 687–727 (PPGV…VPSE). Position 639 is a phosphoserine (serine 639). Threonine 642 carries the phosphothreonine modification. Position 648 is a phosphoserine (serine 648). The tract at residues 653–683 (PPPLLAKPKLDPLKLQQLQNQVRLEQEACAW) is interaction with LASP1. Positions 683–713 (WPPAPPGVPCNSSSSGSSAPPSPPFPPPPPA) are interaction with SORBS2, SPIN90 and SRC. Over residues 691 to 701 (PCNSSSSGSSA) the composition is skewed to low complexity. Serine 700, serine 704, and serine 744 each carry phosphoserine. Over residues 702–714 (PPSPPFPPPPPAF) the composition is skewed to pro residues. Disordered regions lie at residues 758–854 (NLGP…RFGP), 882–904 (KGVT…SDEE), and 960–981 (ETAA…LDGQ). A compositionally biased stretch (low complexity) spans 765-779 (LPTPTSSPSSSSLPS). Composition is skewed to pro residues over residues 780-797 (PLSP…PPFV), 807-818 (SPSPPPPPPPVF), and 828-840 (DVFP…PPLP). The tract at residues 782–842 (SPTPRPFGRA…PPPPPPLPSS (61 aa)) is interaction with EPS8. The tract at residues 807 to 842 (SPSPPPPPPPVFSPSAAYPVPDVFPLPPPPPPLPSS) is interaction with SORBS2, SPIN90, SRC and PFN1. The tract at residues 830–834 (FPLPP) is interaction with VASP. Phosphoserine is present on serine 901. A phosphoserine mark is found at serine 1004 and serine 1009. Residues 1026–1110 (PFFEMKLKHY…MAANPQGRVS (85 aa)) form the Ig-like C2-type 3 domain. Positions 1121-1150 (NQRGRSPRSPSGHPHARRPRSRSRDSGDEN) are disordered. A compositionally biased stretch (low complexity) spans 1123–1133 (RGRSPRSPSGH). Phosphoserine occurs at positions 1126, 1129, 1131, and 1141. At serine 1143 the chain carries Phosphoserine; by PKB/AKT1. A Phosphoserine modification is found at serine 1146. Ig-like C2-type domains are found at residues 1160-1251 (PHFL…LVVA) and 1259-1349 (PVFM…ARLD). 2 interaction with EZR regions span residues 1162-1251 (FLQA…LVVA) and 1261-1351 (FMEK…LDVY). A disulfide bridge links cysteine 1181 with cysteine 1233. Serine 1377 carries the post-translational modification Phosphoserine.

The protein belongs to the myotilin/palladin family. In terms of assembly, interacts with EPS8. Interacts with LASP1. Interacts with VASP. Interacts with ACTN. Interacts with SORBS2. Interacts with PFN1. Interacts with LPP. Interacts with SPIN90. Interacts with SRC. Interacts with EZR. Interacts with RAI14. Phosphorylated predominantly on serines and, to a lesser extent, on tyrosines. Phosphorylation at Ser-1143 by PKB/AKT1 modulates cytoskeletal organization and cell motility. In terms of tissue distribution, detected in both muscle and non-muscle tissues and cells (at protein level). Isoform 3 is widely expressed, isoform 4 is particularly abundant in tissues rich in smooth muscle and in the cardiac muscle and isoform 1 is detected in heart.

The protein resides in the cytoplasm. Its subcellular location is the cytoskeleton. It localises to the cell junction. The protein localises to the focal adhesion. It is found in the myofibril. The protein resides in the sarcomere. Its subcellular location is the z line. It localises to the cell projection. The protein localises to the ruffle. It is found in the podosome. The protein resides in the lamellipodium. Its subcellular location is the axon. It localises to the growth cone. Its function is as follows. Cytoskeletal protein required for organization of normal actin cytoskeleton. Roles in establishing cell morphology, motility, cell adhesion and cell-extracellular matrix interactions in a variety of cell types. May function as a scaffolding molecule with the potential to influence both actin polymerization and the assembly of existing actin filaments into higher-order arrays. Binds to proteins that bind to either monomeric or filamentous actin. Localizes at sites where active actin remodeling takes place, such as lamellipodia and membrane ruffles. Different isoforms may have functional differences. Involved in the control of morphological and cytoskeletal changes associated with dendritic cell maturation. Involved in targeting ACTN to specific subcellular locations. May be required for the initiation of neural tube closure. This is Palladin (Palld) from Mus musculus (Mouse).